The following is a 273-amino-acid chain: Putative phosphoenolpyruvate synthase regulatory protein (273 aa).

154–161 (GVSRSGKT) is an ADP binding site.

The protein belongs to the pyruvate, phosphate/water dikinase regulatory protein family. PSRP subfamily.

The enzyme catalyses [pyruvate, water dikinase] + ADP = [pyruvate, water dikinase]-phosphate + AMP + H(+). The catalysed reaction is [pyruvate, water dikinase]-phosphate + phosphate + H(+) = [pyruvate, water dikinase] + diphosphate. In terms of biological role, bifunctional serine/threonine kinase and phosphorylase involved in the regulation of the phosphoenolpyruvate synthase (PEPS) by catalyzing its phosphorylation/dephosphorylation. The chain is Putative phosphoenolpyruvate synthase regulatory protein from Neisseria meningitidis serogroup B (strain ATCC BAA-335 / MC58).